The primary structure comprises 96 residues: Large ribosomal subunit protein bL27 (96 aa).

Residues 12–33 are disordered; that stretch reads HKGGGSSANGRNSAGRRLGAKA. Residues 19-28 are compositionally biased toward low complexity; it reads ANGRNSAGRR.

It belongs to the bacterial ribosomal protein bL27 family.

The chain is Large ribosomal subunit protein bL27 from Lactobacillus helveticus (strain DPC 4571).